A 258-amino-acid polypeptide reads, in one-letter code: RBPJ-interacting and tubulin-associated protein 1 (258 aa).

3 disordered regions span residues 28-86 (FGSP…PRKK), 132-182 (TPPA…APRS), and 195-258 (AVPS…PPWK). The span at 71 to 81 (SPSSRGSTPNL) shows a compositional bias: polar residues. A Nuclear localization signal motif is present at residues 81 to 97 (LTPRKKNKYRLIGHTPS). The interval 117–145 (RTAVEDAAKLRTLFWTPPATPRGSHSPRP) is interaction with RBPJ/RBPSUH. The interval 145-258 (PRETPLRAIH…CPQKPKPPWK (114 aa)) is interaction with tubulin. 2 stretches are compositionally biased toward polar residues: residues 201 to 212 (HPASTAPQTNGP) and 236 to 245 (GSVSGPTTPQ).

Belongs to the RITA family. In terms of assembly, interacts with RBPJ/RBPSUH.

Its subcellular location is the cytoplasm. It localises to the nucleus. The protein localises to the cytoskeleton. The protein resides in the microtubule organizing center. It is found in the centrosome. Its function is as follows. Tubulin-binding protein that acts as a negative regulator of Notch signaling pathway. Shuttles between the cytoplasm and the nucleus and mediates the nuclear export of RBPJ/RBPSUH, thereby preventing the interaction between RBPJ/RBPSUH and NICD product of Notch proteins (Notch intracellular domain), leading to down-regulate Notch-mediated transcription. May play a role in neurogenesis. This is RBPJ-interacting and tubulin-associated protein 1 (Rita1) from Rattus norvegicus (Rat).